Reading from the N-terminus, the 256-residue chain is 5'-nucleotidase SurE (256 aa).

The a divalent metal cation site is built by Asp13, Asp14, Ser44, and Asn101.

Belongs to the SurE nucleotidase family. Requires a divalent metal cation as cofactor.

It localises to the cytoplasm. It carries out the reaction a ribonucleoside 5'-phosphate + H2O = a ribonucleoside + phosphate. Its function is as follows. Nucleotidase that shows phosphatase activity on nucleoside 5'-monophosphates. This is 5'-nucleotidase SurE from Porphyromonas gingivalis (strain ATCC 33277 / DSM 20709 / CIP 103683 / JCM 12257 / NCTC 11834 / 2561).